The chain runs to 142 residues: HTH-type transcriptional regulator MntR (142 aa).

Positions 1-63 (MPTPSMEDYI…YEKYRGLILT (63 aa)) constitute an HTH dtxR-type domain. Mn(2+)-binding residues include Asp8, Glu11, His77, Glu99, Glu102, and His103.

Belongs to the DtxR/MntR family. As to quaternary structure, homodimer.

It localises to the cytoplasm. Its activity is regulated as follows. DNA binding is strongly activated by Mn(2+). Functionally, central regulator of manganese homeostasis. The polypeptide is HTH-type transcriptional regulator MntR (Listeria welshimeri serovar 6b (strain ATCC 35897 / DSM 20650 / CCUG 15529 / CIP 8149 / NCTC 11857 / SLCC 5334 / V8)).